Here is a 95-residue protein sequence, read N- to C-terminus: Large ribosomal subunit protein eL42 (95 aa).

Zn(2+) is bound by residues Cys-11, Cys-14, Cys-71, and Cys-74. Residues 11–74 (CPRCNTHTEH…QVLVITCTVC (64 aa)) form a C4-type zinc finger.

It belongs to the eukaryotic ribosomal protein eL42 family. Part of the 50S ribosomal subunit. It depends on Zn(2+) as a cofactor.

Its function is as follows. Binds to the 23S rRNA. In Aeropyrum pernix (strain ATCC 700893 / DSM 11879 / JCM 9820 / NBRC 100138 / K1), this protein is Large ribosomal subunit protein eL42.